We begin with the raw amino-acid sequence, 595 residues long: Elongation factor 4 (595 aa).

The tr-type G domain occupies 2 to 184 (SHIRNFSIIA…RLVATIPPPT (183 aa)). Residues 14–19 (DHGKST) and 131–134 (NKMD) each bind GTP.

The protein belongs to the TRAFAC class translation factor GTPase superfamily. Classic translation factor GTPase family. LepA subfamily.

Its subcellular location is the cell inner membrane. The enzyme catalyses GTP + H2O = GDP + phosphate + H(+). Required for accurate and efficient protein synthesis under certain stress conditions. May act as a fidelity factor of the translation reaction, by catalyzing a one-codon backward translocation of tRNAs on improperly translocated ribosomes. Back-translocation proceeds from a post-translocation (POST) complex to a pre-translocation (PRE) complex, thus giving elongation factor G a second chance to translocate the tRNAs correctly. Binds to ribosomes in a GTP-dependent manner. The chain is Elongation factor 4 from Pseudomonas syringae pv. tomato (strain ATCC BAA-871 / DC3000).